Here is a 387-residue protein sequence, read N- to C-terminus: MNAKTDFSGYEVGYDIPALPGMDESEIQTPCLILDLDALERNIRKMGDYAKAHGMRHRSHGKMHKSVDVQKLQESLGGSVGVCCQKVSEAEAFARGGIKDVLVTNEVREPAKIDRLARLPKTGATVTVCVDDVQNIADLSAAAQKHGTELGIFVEIDCGAGRCGVTTKEAVVEIAKAAAAAPNLTFKGIQAYQGRDAAHGQLRGPQGQAGRRHCPGERGRGRAGGRGLAPEFVSGGGTGSYYFESNSGIYNELQCGSYAFMDADYGRIHDAEGKRIDQGEWENALFILTSVMSHAKPHLAVVDAGLKAQSVDSGLPFVYGRDDVKYIKCSDEHGVVEDKDGVLKVNDKLRLVPGHCDPTCNVHDWYVGVRNGKVETVWPVSARGKGY.

An N6-(pyridoxal phosphate)lysine modification is found at Lys-62. Gln-85 lines the pyridoxal 5'-phosphate pocket. A disordered region spans residues 199 to 228 (HGQLRGPQGQAGRRHCPGERGRGRAGGRGL). Pyridoxal 5'-phosphate is bound by residues Thr-238, 256–257 (GS), and Tyr-265. Mg(2+)-binding residues include His-355 and Asp-357.

It belongs to the DSD1 family. Homodimer. The cofactor is pyridoxal 5'-phosphate. Requires Mn(2+) as cofactor. Mg(2+) is required as a cofactor. It depends on Co(2+) as a cofactor.

It carries out the reaction (3S)-3-hydroxy-D-aspartate = glyoxylate + glycine. The enzyme catalyses (3R)-3-hydroxy-D-aspartate = glyoxylate + glycine. Its function is as follows. Catalyzes the condensation of glyoxylate and glycine into (2R,3S)-beta-hydroxyaspartate ((3S)-3-hydroxy-D-aspartate). Functions in glyoxylate assimilation via the beta-hydroxyaspartate cycle (BHAC). In vitro catalyzes the cleavage of both D-erythro- and D-threo-3-hydroxyaspartate to glycine and glyoxylate. Also acts on D-threonine, D-3-phenylserine and D-3-3,4-methylenedioxyphenylserine. This chain is 3-hydroxy-D-aspartate aldolase (dhaa), found in Paracoccus denitrificans.